Reading from the N-terminus, the 131-residue chain is Large ribosomal subunit protein bL19 (131 aa).

Over residues 1–11 (MEETMNNQEAP) the composition is skewed to polar residues. The interval 1–20 (MEETMNNQEAPETSEEETVA) is disordered.

It belongs to the bacterial ribosomal protein bL19 family.

Its function is as follows. This protein is located at the 30S-50S ribosomal subunit interface and may play a role in the structure and function of the aminoacyl-tRNA binding site. This chain is Large ribosomal subunit protein bL19, found in Dehalococcoides mccartyi (strain ATCC BAA-2100 / JCM 16839 / KCTC 5957 / BAV1).